Reading from the N-terminus, the 158-residue chain is 2-C-methyl-D-erythritol 2,4-cyclodiphosphate synthase (158 aa).

Positions 9 and 11 each coordinate a divalent metal cation. 4-CDP-2-C-methyl-D-erythritol 2-phosphate contacts are provided by residues 9 to 11 (DVH) and 35 to 36 (HS). Histidine 43 lines the a divalent metal cation pocket. Residues 57 to 59 (DIG), 62 to 66 (FPDTD), 133 to 136 (TTTE), phenylalanine 140, and arginine 143 contribute to the 4-CDP-2-C-methyl-D-erythritol 2-phosphate site.

It belongs to the IspF family. In terms of assembly, homotrimer. A divalent metal cation serves as cofactor.

It carries out the reaction 4-CDP-2-C-methyl-D-erythritol 2-phosphate = 2-C-methyl-D-erythritol 2,4-cyclic diphosphate + CMP. It participates in isoprenoid biosynthesis; isopentenyl diphosphate biosynthesis via DXP pathway; isopentenyl diphosphate from 1-deoxy-D-xylulose 5-phosphate: step 4/6. Involved in the biosynthesis of isopentenyl diphosphate (IPP) and dimethylallyl diphosphate (DMAPP), two major building blocks of isoprenoid compounds. Catalyzes the conversion of 4-diphosphocytidyl-2-C-methyl-D-erythritol 2-phosphate (CDP-ME2P) to 2-C-methyl-D-erythritol 2,4-cyclodiphosphate (ME-CPP) with a corresponding release of cytidine 5-monophosphate (CMP). In Haemophilus influenzae (strain PittEE), this protein is 2-C-methyl-D-erythritol 2,4-cyclodiphosphate synthase.